Consider the following 507-residue polypeptide: Mandelamide hydrolase (507 aa).

Active-site charge relay system residues include Lys-100 and Ser-180. The Acyl-ester intermediate role is filled by Ser-204.

As to quaternary structure, monomer.

The catalysed reaction is (R)-mandelamide + H2O = (R)-mandelate + NH4(+). Its activity is regulated as follows. Inhibited by 3,4-dichloroisocoumarin and PMSF. Functionally, hydrolyzes both the R- and the S-enantiomers of mandelamide, and phenylacetamide. Has lower activity on 3-phenylpropionaide and lactamide. Does not hydrolyze benzamide. Hydrolyzes esters and amides with little steric bulk. Preferentially hydrolyzes aromatic substrates. The sequence is that of Mandelamide hydrolase from Pseudomonas putida (Arthrobacter siderocapsulatus).